Here is a 169-residue protein sequence, read N- to C-terminus: Disulfide bond formation protein B (169 aa).

Topologically, residues Met-1–Leu-14 are cytoplasmic. A helical membrane pass occupies residues Leu-15–Tyr-31. Residues Leu-32–Tyr-49 are Periplasmic-facing. A disulfide bond links Cys-41 and Cys-44. A helical membrane pass occupies residues Phe-50 to Met-64. At Ala-65–Ala-71 the chain is on the cytoplasmic side. Residues Val-72–Ala-89 form a helical membrane-spanning segment. Residues Arg-90–Gly-144 lie on the Periplasmic side of the membrane. A disulfide bridge links Cys-102 with Cys-130. The helical transmembrane segment at Trp-145–Arg-163 threads the bilayer. The Cytoplasmic portion of the chain corresponds to His-164–Arg-169.

It belongs to the DsbB family.

The protein localises to the cell inner membrane. Functionally, required for disulfide bond formation in some periplasmic proteins. Acts by oxidizing the DsbA protein. In Burkholderia mallei (strain ATCC 23344), this protein is Disulfide bond formation protein B.